Reading from the N-terminus, the 91-residue chain is Beta-microseminoprotein (91 aa).

5 disulfide bridges follow: cysteine 2–cysteine 54, cysteine 22–cysteine 46, cysteine 41–cysteine 75, cysteine 44–cysteine 53, and cysteine 68–cysteine 88.

As to expression, expressed in ciliated epithelium of nidamental gland and in secretory-like cells in accessory nidamental gland (at protein level). Expressed in ovary, nidamental gland and accessory nidamental gland.

The protein localises to the secreted. Functionally, acts as a pheromone. Triggers aggressive behaviors in males such as fin beating, lunging and grabbing. These behaviors form part of the competition for fertile females. The polypeptide is Beta-microseminoprotein (Doryteuthis pealeii (Longfin inshore squid)).